Here is a 107-residue protein sequence, read N- to C-terminus: Protamine-2 (107 aa).

The disordered stretch occupies residues 1–94 (MVRYRMRSPS…RRGCRRSRRR (94 aa)). Serine 8, serine 10, and serine 33 each carry phosphoserine. The segment covering 43 to 94 (THRGHHHHRHRRCSRKRLHRIHKRRRSCRRRRRHSCRHRRRHRRGCRRSRRR) has biased composition (basic residues).

Belongs to the protamine P2 family. In terms of assembly, interacts with TDRP. In terms of processing, proteolytic processing into mature chains is required for histone eviction during spermatogenesis. Transition proteins (TNP1 and TNP2) are required for processing. Expressed in spermatids (at protein level).

The protein localises to the nucleus. It is found in the chromosome. Functionally, protamines substitute for histones in the chromatin of sperm during the haploid phase of spermatogenesis. They compact sperm DNA into a highly condensed, stable and inactive complex. This is Protamine-2 (Prm2) from Mus musculus (Mouse).